The chain runs to 439 residues: Glutamate--tRNA ligase 2 (439 aa).

A 'HIGH' region motif is present at residues Pro6–Asn16. The 'KMSKS' region motif lies at Lys232–Arg236. Lys235 is a binding site for ATP.

Belongs to the class-I aminoacyl-tRNA synthetase family. Glutamate--tRNA ligase type 1 subfamily. Monomer.

The protein localises to the cytoplasm. The catalysed reaction is tRNA(Glu) + L-glutamate + ATP = L-glutamyl-tRNA(Glu) + AMP + diphosphate. Functionally, catalyzes the attachment of glutamate to tRNA(Glu) in a two-step reaction: glutamate is first activated by ATP to form Glu-AMP and then transferred to the acceptor end of tRNA(Glu). In Helicobacter pylori (strain P12), this protein is Glutamate--tRNA ligase 2.